Here is a 146-residue protein sequence, read N- to C-terminus: Protein SprT-like (146 aa).

Positions 4-142 (NEYVKQVSLE…GRCKGKLRLL (139 aa)) constitute a SprT-like domain. Histidine 64 is a binding site for Zn(2+). Glutamate 65 is a catalytic residue. Position 68 (histidine 68) interacts with Zn(2+).

This sequence belongs to the SprT family. Zn(2+) is required as a cofactor.

The protein resides in the cytoplasm. The chain is Protein SprT-like from Streptococcus gordonii (strain Challis / ATCC 35105 / BCRC 15272 / CH1 / DL1 / V288).